The following is a 159-amino-acid chain: NADH-quinone oxidoreductase subunit B (159 aa).

[4Fe-4S] cluster-binding residues include Cys37, Cys38, Cys102, and Cys132.

This sequence belongs to the complex I 20 kDa subunit family. NDH-1 is composed of 14 different subunits. Subunits NuoB, C, D, E, F, and G constitute the peripheral sector of the complex. [4Fe-4S] cluster serves as cofactor.

The protein resides in the cell inner membrane. The catalysed reaction is a quinone + NADH + 5 H(+)(in) = a quinol + NAD(+) + 4 H(+)(out). In terms of biological role, NDH-1 shuttles electrons from NADH, via FMN and iron-sulfur (Fe-S) centers, to quinones in the respiratory chain. Couples the redox reaction to proton translocation (for every two electrons transferred, four hydrogen ions are translocated across the cytoplasmic membrane), and thus conserves the redox energy in a proton gradient. This is NADH-quinone oxidoreductase subunit B from Paraburkholderia phymatum (strain DSM 17167 / CIP 108236 / LMG 21445 / STM815) (Burkholderia phymatum).